Consider the following 167-residue polypeptide: RNA pyrophosphohydrolase (167 aa).

Positions 8–158 (PYRRNVGAML…KRDIYRTLVR (151 aa)) constitute a Nudix hydrolase domain. The Nudix box signature appears at 49–70 (GGIDADEDPEEAVLRELREEIG).

It belongs to the Nudix hydrolase family. RppH subfamily. A divalent metal cation is required as a cofactor.

In terms of biological role, accelerates the degradation of transcripts by removing pyrophosphate from the 5'-end of triphosphorylated RNA, leading to a more labile monophosphorylated state that can stimulate subsequent ribonuclease cleavage. This Gluconacetobacter diazotrophicus (strain ATCC 49037 / DSM 5601 / CCUG 37298 / CIP 103539 / LMG 7603 / PAl5) protein is RNA pyrophosphohydrolase.